Here is a 395-residue protein sequence, read N- to C-terminus: ATP synthase subunit beta, chloroplastic (395 aa).

Position 72–79 (72–79) interacts with ATP; sequence GGAGVGKT.

This sequence belongs to the ATPase alpha/beta chains family. F-type ATPases have 2 components, CF(1) - the catalytic core - and CF(0) - the membrane proton channel. CF(1) has five subunits: alpha(3), beta(3), gamma(1), delta(1), epsilon(1). CF(0) has four main subunits: a(1), b(1), b'(1) and c(9-12).

Its subcellular location is the plastid. It localises to the chloroplast thylakoid membrane. It catalyses the reaction ATP + H2O + 4 H(+)(in) = ADP + phosphate + 5 H(+)(out). Functionally, produces ATP from ADP in the presence of a proton gradient across the membrane. The catalytic sites are hosted primarily by the beta subunits. The protein is ATP synthase subunit beta, chloroplastic of Microlepia platyphylla (Plate fern).